Reading from the N-terminus, the 184-residue chain is MAYEFVPLKEKYQKEVVPVLMKEFGYKNIHEVPRLVKVVINMGVGEGSRNKDVIEAHARELTTIAGQKAIITKAKKSISNFKIRKGMSVGVKVTLRGPRMYNFVYKLVNLVLPKVRDFRGLNPNSFDGKGNYSFGLTEQLVFPEISPDQIKRIQGMDIVVVTTAKRDEEARRLLELLGFPFKKQ.

The protein belongs to the universal ribosomal protein uL5 family. As to quaternary structure, part of the 50S ribosomal subunit; part of the 5S rRNA/L5/L18/L25 subcomplex. Contacts the 5S rRNA and the P site tRNA. Forms a bridge to the 30S subunit in the 70S ribosome.

Its function is as follows. This is one of the proteins that bind and probably mediate the attachment of the 5S RNA into the large ribosomal subunit, where it forms part of the central protuberance. In the 70S ribosome it contacts protein S13 of the 30S subunit (bridge B1b), connecting the 2 subunits; this bridge is implicated in subunit movement. Contacts the P site tRNA; the 5S rRNA and some of its associated proteins might help stabilize positioning of ribosome-bound tRNAs. This Fervidobacterium nodosum (strain ATCC 35602 / DSM 5306 / Rt17-B1) protein is Large ribosomal subunit protein uL5.